Consider the following 410-residue polypeptide: Multifunctional CCA protein (410 aa).

Residues Gly-8 and Arg-11 each coordinate ATP. Residues Gly-8 and Arg-11 each contribute to the CTP site. Residues Asp-21 and Asp-23 each coordinate Mg(2+). ATP-binding residues include Arg-91, Arg-138, and Arg-141. 3 residues coordinate CTP: Arg-91, Arg-138, and Arg-141. Positions 229 to 347 (TGIHQEMVSD…AQLALVCEAD (119 aa)) constitute an HD domain.

Belongs to the tRNA nucleotidyltransferase/poly(A) polymerase family. Bacterial CCA-adding enzyme type 1 subfamily. In terms of assembly, monomer. Can also form homodimers and oligomers. It depends on Mg(2+) as a cofactor. The cofactor is Ni(2+).

The catalysed reaction is a tRNA precursor + 2 CTP + ATP = a tRNA with a 3' CCA end + 3 diphosphate. It carries out the reaction a tRNA with a 3' CCA end + 2 CTP + ATP = a tRNA with a 3' CCACCA end + 3 diphosphate. Functionally, catalyzes the addition and repair of the essential 3'-terminal CCA sequence in tRNAs without using a nucleic acid template. Adds these three nucleotides in the order of C, C, and A to the tRNA nucleotide-73, using CTP and ATP as substrates and producing inorganic pyrophosphate. tRNA 3'-terminal CCA addition is required both for tRNA processing and repair. Also involved in tRNA surveillance by mediating tandem CCA addition to generate a CCACCA at the 3' terminus of unstable tRNAs. While stable tRNAs receive only 3'-terminal CCA, unstable tRNAs are marked with CCACCA and rapidly degraded. The protein is Multifunctional CCA protein of Xanthomonas euvesicatoria pv. vesicatoria (strain 85-10) (Xanthomonas campestris pv. vesicatoria).